Here is a 481-residue protein sequence, read N- to C-terminus: MSVDARTAYPGSRPPANMQDESDVEEEALVNNYKEQVHFDDGMSELDRTTSLGAASQTQGLQAQLAAAATPLEFQATLETKFASYDNYCSLFHYILNSDGPVDLEVPSYYWAWDVIDEFIYQFESFCRYRNRVARTGSNEEEAQLLRENPNTWGCYSVLNVLYSLIQRSQINEQLAAIKANEDPMAVAGDYGSRPLYRMLGYFSIIGLLRVHCLLGDFSLALKTLDDIEMNKKAMFARVMAAHFTTYYYVGFSYMMMRRYADAIRTFSHILVYVSRTKNFQKGRESYDAIAKKNDQILALIAICVSFHPTRLDDTIHSGLREKYGDQFIRLQRGGPDALPLYEELFRSACPKFISPTPPDFDNPALNIDPVDHHTAVFMDEVRNTLYNPTVKSYLKLYTTMDLKKLAGFLEVEPEQLRSWLLVNKLRSRQVRWSEGGLLEGEIVNSSDLDYAIEGNLIHISETKAGRRLVDWYLRNLARTY.

Residues 1-22 form a disordered region; it reads MSVDARTAYPGSRPPANMQDES. A PCI domain is found at 262 to 457; it reads DAIRTFSHIL…DLDYAIEGNL (196 aa).

This sequence belongs to the eIF-3 subunit L family. In terms of assembly, component of the eukaryotic translation initiation factor 3 (eIF-3) complex.

It localises to the cytoplasm. Functionally, component of the eukaryotic translation initiation factor 3 (eIF-3) complex, which is involved in protein synthesis of a specialized repertoire of mRNAs and, together with other initiation factors, stimulates binding of mRNA and methionyl-tRNAi to the 40S ribosome. The eIF-3 complex specifically targets and initiates translation of a subset of mRNAs involved in cell proliferation. The chain is Eukaryotic translation initiation factor 3 subunit L from Coccidioides immitis (strain RS) (Valley fever fungus).